The primary structure comprises 161 residues: Epithelial membrane protein 2 (161 aa).

Helical transmembrane passes span 1 to 21 (MLVI…LLFI), 67 to 87 (TMIL…LQLF), 95 to 115 (FVFT…GASI), and 137 to 157 (FVVA…YLVL).

The protein belongs to the PMP-22/EMP/MP20 family. In terms of tissue distribution, expressed in the arches, orbits, pectoral fins, vessels, pronephric renal tubules, and glomeruli.

Its subcellular location is the golgi apparatus membrane. It localises to the cell membrane. It is found in the apical cell membrane. The protein resides in the membrane raft. The protein localises to the cytoplasm. Its subcellular location is the nucleus. It localises to the perinuclear region. In terms of biological role, functions as a key regulator of cell membrane composition by regulating protein surface expression. Also, plays a role in regulation of processes including cell migration, cell proliferation, cell contraction and cell adhesion. May play a role in glomerular filtration. The protein is Epithelial membrane protein 2 (emp2) of Danio rerio (Zebrafish).